Consider the following 289-residue polypeptide: mRNA-capping enzyme small subunit (289 aa).

In terms of assembly, heterodimer of a large and a small subunit.

The protein resides in the virion. The enzyme catalyses a 5'-end (5'-triphosphoguanosine)-ribonucleoside in mRNA + S-adenosyl-L-methionine = a 5'-end (N(7)-methyl 5'-triphosphoguanosine)-ribonucleoside in mRNA + S-adenosyl-L-homocysteine. Functionally, catalyzes the last reaction in the mRNA cap formation pathway. The chain is mRNA-capping enzyme small subunit from Fowlpox virus (strain NVSL) (FPV).